The chain runs to 347 residues: D-alanine--D-alanine ligase (347 aa).

Residues 131–333 (KRVLESAGIA…YPELIERLVD (203 aa)) form the ATP-grasp domain. An ATP-binding site is contributed by 161–216 (EEKLAYPVFTKPSNMGSSVGISKSENQEELRQALKLAFRYDSRVLVEQGVNAREIE). 3 residues coordinate Mg(2+): D287, E300, and N302.

Belongs to the D-alanine--D-alanine ligase family. The cofactor is Mg(2+). Mn(2+) serves as cofactor.

It localises to the cytoplasm. The enzyme catalyses 2 D-alanine + ATP = D-alanyl-D-alanine + ADP + phosphate + H(+). Its pathway is cell wall biogenesis; peptidoglycan biosynthesis. Its function is as follows. Cell wall formation. The protein is D-alanine--D-alanine ligase of Streptococcus pneumoniae (strain ATCC BAA-255 / R6).